A 210-amino-acid chain; its full sequence is MPPYTIVYFPSPGRCEAMRMLLADQGQSWKEEVVTIDTWMQGLLKPTCLYGQLPKFEDGDLTLYQSNAILRHLGRSLGLYGKNQREAAQVDMVNDGVEDLRGKYGTMIYRNYENGKNDYVKALPGHLKPFETLLSQNQGGKAFIVGDQISFADYNLLDLLLIHQVLAPGCLDNFPLLSAYVARLSARPKIKAFLSSPEHVNRPINGNGKQ.

The region spanning 2 to 81 (PPYTIVYFPS…HLGRSLGLYG (80 aa)) is the GST N-terminal domain. Glutathione contacts are provided by residues tyrosine 8, arginine 14, tryptophan 39, lysine 45, 52 to 53 (QL), and 65 to 66 (QS). The GST C-terminal domain occupies 83–204 (NQREAAQVDM…SSPEHVNRPI (122 aa)).

The protein belongs to the GST superfamily. Pi family. As to quaternary structure, homodimer. Selectively expressed in gall bladder, colon, heart, and skeletal muscle.

It catalyses the reaction RX + glutathione = an S-substituted glutathione + a halide anion + H(+). Conjugation of reduced glutathione to a wide number of exogenous and endogenous hydrophobic electrophiles. Cannot metabolize 1-chloro-2,4-dinitrobenzene. In Mus musculus (Mouse), this protein is Glutathione S-transferase P 2 (Gstp2).